Consider the following 379-residue polypeptide: 2-dehydropantoate 2-reductase (379 aa).

NADP(+) contacts are provided by residues 13-18 (GLGAMG) and Asn119. Asn119 serves as a coordination point for substrate. Catalysis depends on Lys224, which acts as the Proton donor. Residues Asn228, Asn232, and Ser316 each contribute to the substrate site. Glu328 contributes to the NADP(+) binding site.

It belongs to the ketopantoate reductase family.

It catalyses the reaction (R)-pantoate + NADP(+) = 2-dehydropantoate + NADPH + H(+). It participates in cofactor biosynthesis; (R)-pantothenate biosynthesis; (R)-pantoate from 3-methyl-2-oxobutanoate: step 2/2. Functionally, catalyzes the NADPH-dependent reduction of ketopantoate into pantoic acid. This is 2-dehydropantoate 2-reductase (PAN5) from Saccharomyces cerevisiae (strain ATCC 204508 / S288c) (Baker's yeast).